The sequence spans 366 residues: S-adenosylmethionine:tRNA ribosyltransferase-isomerase (366 aa).

This sequence belongs to the QueA family. In terms of assembly, monomer.

The protein localises to the cytoplasm. The enzyme catalyses 7-aminomethyl-7-carbaguanosine(34) in tRNA + S-adenosyl-L-methionine = epoxyqueuosine(34) in tRNA + adenine + L-methionine + 2 H(+). It functions in the pathway tRNA modification; tRNA-queuosine biosynthesis. Transfers and isomerizes the ribose moiety from AdoMet to the 7-aminomethyl group of 7-deazaguanine (preQ1-tRNA) to give epoxyqueuosine (oQ-tRNA). The sequence is that of S-adenosylmethionine:tRNA ribosyltransferase-isomerase from Methylorubrum populi (strain ATCC BAA-705 / NCIMB 13946 / BJ001) (Methylobacterium populi).